Here is a 507-residue protein sequence, read N- to C-terminus: Serine/threonine-protein kinase CBK1 (507 aa).

The segment at Met1–Lys30 is disordered. One can recognise a Protein kinase domain in the interval Phe126 to Phe431. Residues Ile132–Val140 and Lys155 contribute to the ATP site. Catalysis depends on Asp249, which acts as the Proton acceptor. Positions Arg432 to Gly505 constitute an AGC-kinase C-terminal domain.

Belongs to the protein kinase superfamily. STE Ser/Thr protein kinase family. COT1 subfamily.

The enzyme catalyses L-seryl-[protein] + ATP = O-phospho-L-seryl-[protein] + ADP + H(+). It carries out the reaction L-threonyl-[protein] + ATP = O-phospho-L-threonyl-[protein] + ADP + H(+). Its function is as follows. Protein kinase that seems to play a role in signaling pathways necessary for cell growth and mating. In Pneumocystis carinii, this protein is Serine/threonine-protein kinase CBK1 (CBK1).